We begin with the raw amino-acid sequence, 164 residues long: Probable calcium-binding protein CML17 (164 aa).

EF-hand domains follow at residues 4 to 39, 40 to 75, 88 to 123, and 126 to 161; these read DQQA…LGMP, VHRE…VMRV, VDEA…LGIK, and RTAE…GAFA. Asp-17, Asp-19, Asp-21, Arg-23, Glu-28, Asp-53, Asn-55, Asp-57, Cys-59, Glu-64, Asp-101, Asn-103, Asp-105, Glu-112, Asp-139, Asp-141, Asp-143, Arg-145, and Glu-150 together coordinate Ca(2+).

Its function is as follows. Potential calcium sensor. This is Probable calcium-binding protein CML17 (CML17) from Oryza sativa subsp. japonica (Rice).